The chain runs to 427 residues: Phosphatidylglycerol--prolipoprotein diacylglyceryl transferase (427 aa).

Helical transmembrane passes span Val21–Gly41, Gly53–Tyr73, Ile96–Ile116, and Gly122–Ile142. A 1,2-diacyl-sn-glycero-3-phospho-(1'-sn-glycerol) is bound at residue Arg144. The next 2 membrane-spanning stretches (helical) occupy residues Val189 to Val209 and Ile256 to Pro276. A disordered region spans residues Glu280 to Arg427. Residues Glu299–Ala330 are compositionally biased toward low complexity. The segment covering Arg332–Ser346 has biased composition (basic and acidic residues). A compositionally biased stretch (acidic residues) spans Glu347–Glu404. Over residues Glu411–Arg427 the composition is skewed to basic and acidic residues.

The protein belongs to the Lgt family.

It localises to the cell membrane. It catalyses the reaction L-cysteinyl-[prolipoprotein] + a 1,2-diacyl-sn-glycero-3-phospho-(1'-sn-glycerol) = an S-1,2-diacyl-sn-glyceryl-L-cysteinyl-[prolipoprotein] + sn-glycerol 1-phosphate + H(+). The protein operates within protein modification; lipoprotein biosynthesis (diacylglyceryl transfer). Catalyzes the transfer of the diacylglyceryl group from phosphatidylglycerol to the sulfhydryl group of the N-terminal cysteine of a prolipoprotein, the first step in the formation of mature lipoproteins. The polypeptide is Phosphatidylglycerol--prolipoprotein diacylglyceryl transferase (Mycolicibacterium paratuberculosis (strain ATCC BAA-968 / K-10) (Mycobacterium paratuberculosis)).